The chain runs to 505 residues: Sucrose porin (505 aa).

The first 22 residues, 1 to 22 (MYKKRKLAILIALLTGTAAAHG), serve as a signal peptide directing secretion. The disordered stretch occupies residues 44-94 (ETRASTAESRAASAEQKVQQLTQQQQQTQATTQQVARRTTQLEEKAERPGG). Over residues 46–82 (RASTAESRAASAEQKVQQLTQQQQQTQATTQQVARRT) the composition is skewed to low complexity. A compositionally biased stretch (basic and acidic residues) spans 83–93 (TQLEEKAERPG).

The protein belongs to the porin LamB (TC 1.B.3) family. Homotrimer.

It localises to the cell outer membrane. Its function is as follows. Porin for sucrose uptake. The polypeptide is Sucrose porin (scrY) (Klebsiella pneumoniae).